Consider the following 427-residue polypeptide: Glutamate-1-semialdehyde 2,1-aminomutase (427 aa).

Lys268 carries the post-translational modification N6-(pyridoxal phosphate)lysine.

It belongs to the class-III pyridoxal-phosphate-dependent aminotransferase family. HemL subfamily. The cofactor is pyridoxal 5'-phosphate.

Its subcellular location is the cytoplasm. It catalyses the reaction (S)-4-amino-5-oxopentanoate = 5-aminolevulinate. It participates in porphyrin-containing compound metabolism; protoporphyrin-IX biosynthesis; 5-aminolevulinate from L-glutamyl-tRNA(Glu): step 2/2. This is Glutamate-1-semialdehyde 2,1-aminomutase from Methanococcus vannielii (strain ATCC 35089 / DSM 1224 / JCM 13029 / OCM 148 / SB).